The sequence spans 289 residues: Energy-coupling factor transporter ATP-binding protein EcfA2 (289 aa).

The region spanning 3 to 246 (IEIKDVEHRY…KDDIAALGLD (244 aa)) is the ABC transporter domain. 40–47 (GHTGSGKS) provides a ligand contact to ATP.

The protein belongs to the ABC transporter superfamily. Energy-coupling factor EcfA family. In terms of assembly, forms a stable energy-coupling factor (ECF) transporter complex composed of 2 membrane-embedded substrate-binding proteins (S component), 2 ATP-binding proteins (A component) and 2 transmembrane proteins (T component).

The protein resides in the cell membrane. In terms of biological role, ATP-binding (A) component of a common energy-coupling factor (ECF) ABC-transporter complex. Unlike classic ABC transporters this ECF transporter provides the energy necessary to transport a number of different substrates. The protein is Energy-coupling factor transporter ATP-binding protein EcfA2 of Bacillus licheniformis (strain ATCC 14580 / DSM 13 / JCM 2505 / CCUG 7422 / NBRC 12200 / NCIMB 9375 / NCTC 10341 / NRRL NRS-1264 / Gibson 46).